We begin with the raw amino-acid sequence, 299 residues long: MAEEQARHVKNGLECIRALKAEPIGSLAVEEAMAAWSEISDNPGQDRATCKEEEAGSSGLSKPCLSAIGSTEGGAPRIRGQGSGESDDDAETLGIPSRNLQASSTGLQCYHVYDHSGEAVKGIQDADSIMVQSGLDGDSTLSGGDDESENSDVDIGEPDTEGYAITDRGSAPISMGFRASDVETAEGGEIHELLKLQSRGNNFPKLGKTLNVPPPPNPSRASTSETPIKKGHRREIGLIWNGDRVFIDRWCNPMCSKVTLGTIRARCTCGECPRVCEQCRTDTGVDTRIWYHNLPEIPE.

Residues Ser40 to Gly94 form a disordered region. The interval Tyr110–Val120 is interaction with host STAT1. Residues Ser133–Gly143 show a composition bias toward low complexity. Disordered stretches follow at residues Ser133 to Arg168 and Pro204 to Lys229. A compositionally biased stretch (acidic residues) spans Gly144–Thr160. Residues His232, Cys251, Cys255, Cys267, Cys269, Cys272, Cys276, and Cys279 each coordinate Zn(2+).

This sequence belongs to the paramyxoviruses V protein family. As to quaternary structure, interacts with host IFIH1/MDA5 and DHX58/LGP2; these interactions are involved in the inhibition of the host type I interferon signaling pathway. Interacts with host TYK2; this interaction inhibits the type I interferon signaling pathway without affecting the type II pathway. Interacts with host IRF7; this interaction inhibits IRF7 translocation to the nucleus. Interacts with host CHUK. Interacts with host RELA/p65; this interaction inhibits the nuclear translocation of NF-KappaB. Interacts (via N-terminus) with host STAT1 and JAK1; these interactions inhibit STAT1 phosphorylation by Jak1 and thereby the type I interferon signaling pathway. Interacts (via C-terminus) with host STAT2; this interaction is involved in the inhibition of the host type I interferon signaling pathway. Forms a complex with host PPP1CA and PPP1CC; this interaction prevents dephosphorylation of host IFIH1/MDA5 and leads to the inhibition of the host type I interferon signaling pathway. Interacts with host IRF9; this interaction prevents the binding of IRF9 to STAT2 and thereby the type I interferon signaling pathway. Interacts with host RIGI regulatory protein (via CARDs domain) and host TRIM25 (via SPRY domain); these interactions prevent TRIM25-mediated ubiquitination of RIG-I and disrupts downstream RIG-I signaling.

Its subcellular location is the host cytoplasm. Plays an essential role in the inhibition of host immune response. Prevents the establishment of cellular antiviral state by blocking interferon-alpha/beta (IFN-alpha/beta) production and signaling pathway. Interacts with host IFIH1/MDA5 and DHX58/LGP2 to inhibit the transduction pathway involved in the activation of IFN-beta promoter, thus protecting the virus against cell antiviral state. Blocks the type I interferon signaling pathway by interacting with host TYK2 and thereby inhibiting downstream STAT1 and STAT2 phosphorylation. Blocks the type I interferon signaling pathway by disrupting the RIG-I signaling pathway. Moderately affects the type II interferon signaling. Prevents PP1alpha/gamma-mediated dephosphorylation of host IFIH1/MDA5 and thus blocks its activation. This chain is Non-structural protein V (P/V), found in Homo sapiens (Human).